The primary structure comprises 904 residues: DNA mismatch repair protein MutS (904 aa).

Residue 654 to 661 (GPNMAGKS) coordinates ATP.

Belongs to the DNA mismatch repair MutS family.

This protein is involved in the repair of mismatches in DNA. It is possible that it carries out the mismatch recognition step. This protein has a weak ATPase activity. The sequence is that of DNA mismatch repair protein MutS from Caulobacter sp. (strain K31).